The primary structure comprises 612 residues: Threonine--tRNA ligase (612 aa).

The catalytic stretch occupies residues D218–P509. C310, H361, and H486 together coordinate Zn(2+).

The protein belongs to the class-II aminoacyl-tRNA synthetase family. As to quaternary structure, homodimer. It depends on Zn(2+) as a cofactor.

The protein localises to the cytoplasm. The catalysed reaction is tRNA(Thr) + L-threonine + ATP = L-threonyl-tRNA(Thr) + AMP + diphosphate + H(+). In terms of biological role, catalyzes the attachment of threonine to tRNA(Thr) in a two-step reaction: L-threonine is first activated by ATP to form Thr-AMP and then transferred to the acceptor end of tRNA(Thr). Also edits incorrectly charged L-seryl-tRNA(Thr). This chain is Threonine--tRNA ligase, found in Helicobacter pylori (strain J99 / ATCC 700824) (Campylobacter pylori J99).